The primary structure comprises 449 residues: Intestinal acid phosphatase (449 aa).

The first 19 residues, 1 to 19 (MVSAISIVAIFALEGFVTT), serve as a signal peptide directing secretion. The Extracellular segment spans residues 20–428 (YSDGTKDLVF…TDLNKSSSFA (409 aa)). His-36 acts as the Nucleophile in catalysis. Asp-321 (proton donor) is an active-site residue. The helical transmembrane segment at 429 to 449 (TVSMLFIAAILAINNNFLGLF) threads the bilayer.

This sequence belongs to the histidine acid phosphatase family. As to quaternary structure, homodimer. The N-terminus is blocked. Expressed in the intestine, specifically on the edge of the gut lumen, in the 14 posterior cells of the intestine.

Its subcellular location is the membrane. It catalyses the reaction a phosphate monoester + H2O = an alcohol + phosphate. In terms of biological role, acid phosphatase required for normal growth and development. Specifically required for normal gut differentiation. The protein is Intestinal acid phosphatase of Caenorhabditis elegans.